Consider the following 226-residue polypeptide: Ribonuclease 3 (226 aa).

The region spanning 7-129 (LARLSRTLGY…IIGAVYLDAN (123 aa)) is the RNase III domain. Position 42 (Glu42) interacts with Mg(2+). The active site involves Asp46. Positions 115 and 118 each coordinate Mg(2+). Glu118 is an active-site residue. The DRBM domain maps to 156–226 (DPKTILQEYL…AAQILELINK (71 aa)).

Belongs to the ribonuclease III family. As to quaternary structure, homodimer. It depends on Mg(2+) as a cofactor.

The protein localises to the cytoplasm. The enzyme catalyses Endonucleolytic cleavage to 5'-phosphomonoester.. Functionally, digests double-stranded RNA. Involved in the processing of primary rRNA transcript to yield the immediate precursors to the large and small rRNAs (23S and 16S). Processes some mRNAs, and tRNAs when they are encoded in the rRNA operon. Processes pre-crRNA and tracrRNA of type II CRISPR loci if present in the organism. This is Ribonuclease 3 from Shewanella denitrificans (strain OS217 / ATCC BAA-1090 / DSM 15013).